The following is a 100-amino-acid chain: Large ribosomal subunit protein uL23 (100 aa).

This sequence belongs to the universal ribosomal protein uL23 family. In terms of assembly, part of the 50S ribosomal subunit. Contacts protein L29, and trigger factor when it is bound to the ribosome.

One of the early assembly proteins it binds 23S rRNA. One of the proteins that surrounds the polypeptide exit tunnel on the outside of the ribosome. Forms the main docking site for trigger factor binding to the ribosome. In Synechococcus elongatus (strain ATCC 33912 / PCC 7942 / FACHB-805) (Anacystis nidulans R2), this protein is Large ribosomal subunit protein uL23.